The sequence spans 909 residues: Disintegrin and metalloproteinase domain-containing protein 12 (909 aa).

An N-terminal signal peptide occupies residues 1–28; that stretch reads MAARPLPVSPARALLLALAGALLAPCEA. Positions 29–207 are excised as a propeptide; it reads RGVSLWNQGR…SQTWARRHKR (179 aa). Residues Asn111 and Asn149 are each glycosylated (N-linked (GlcNAc...) asparagine). Residues 177 to 184 carry the Cysteine switch motif; the sequence is GSCGSHHN. Zn(2+)-binding residues include Cys179 and His350. Residues 208-708 are Extracellular-facing; that stretch reads ETLKATKYVE…GPIRQADNQG (501 aa). Residues 214–416 form the Peptidase M12B domain; the sequence is KYVELVIVAD…GMGVCLFNLP (203 aa). Cystine bridges form between Cys325/Cys411, Cys367/Cys395, and Cys369/Cys378. Glu351 is an active-site residue. 2 residues coordinate Zn(2+): His354 and His360. Asn381 and Asn452 each carry an N-linked (GlcNAc...) asparagine glycan. In terms of domain architecture, Disintegrin spans 424 to 510; that stretch reads GQKCGNRFVE…HCPANVYLHD (87 aa). Cysteines 482 and 502 form a disulfide. Asn651 carries N-linked (GlcNAc...) asparagine glycosylation. Residues 656–688 enclose the EGF-like domain; it reads GVHECAMQCHGRGVCNNRKNCHCEAHWAPPFCD. Cystine bridges form between Cys660–Cys670, Cys664–Cys676, and Cys678–Cys687. Residues 709-729 traverse the membrane as a helical segment; sequence LTIGILVTILCLLAAGFVVYL. Over 730–909 the chain is Cytoplasmic; that stretch reads KRKTLIRLLF…PRSTHTAYIK (180 aa). A disordered region spans residues 822 to 862; sequence LHRAPRAPSVPARPLPAKPALRQAQGTCKPNPPQKPLPADP. The SH3-binding; class II signature appears at 828-834; that stretch reads APSVPAR. Positions 834 to 841 match the SH3-binding; class I motif; the sequence is RPLPAKPA. The span at 851–860 shows a compositional bias: pro residues; that stretch reads PNPPQKPLPA. The SH3-binding; class I signature appears at 885-891; sequence RLAPLRP. Tyr907 bears the Phosphotyrosine; by SRC mark.

In terms of assembly, interacts with alpha-actinin-2 and with syndecans. Interacts with SH3PXD2A. Interacts with FST3. Interacts with RACK1; the interaction is required for PKC-dependent translocation of ADAM12 to the cell membrane. The cofactor is Zn(2+). The precursor is cleaved by a furin endopeptidase. In terms of tissue distribution, isoform 1 is expressed in placenta and skeletal, cardiac, and smooth muscle. Isoform 2 seems to be expressed only in placenta or in embryo and fetus. Both forms were expressed in some tumor cells lines. Not detected in brain, lung, liver, kidney or pancreas.

Its subcellular location is the cell membrane. The protein localises to the secreted. Involved in skeletal muscle regeneration, specifically at the onset of cell fusion. Also involved in macrophage-derived giant cells (MGC) and osteoclast formation from mononuclear precursors. This Homo sapiens (Human) protein is Disintegrin and metalloproteinase domain-containing protein 12 (ADAM12).